Reading from the N-terminus, the 410-residue chain is Imidazolonepropionase (410 aa).

The Fe(3+) site is built by histidine 73 and histidine 75. Positions 73 and 75 each coordinate Zn(2+). 4-imidazolone-5-propanoate is bound by residues arginine 82, tyrosine 145, and histidine 178. Position 145 (tyrosine 145) interacts with N-formimidoyl-L-glutamate. Residue histidine 243 coordinates Fe(3+). Position 243 (histidine 243) interacts with Zn(2+). Residue glutamine 246 participates in 4-imidazolone-5-propanoate binding. Fe(3+) is bound at residue aspartate 318. Residue aspartate 318 coordinates Zn(2+). Asparagine 320 and glycine 322 together coordinate N-formimidoyl-L-glutamate. Serine 323 contacts 4-imidazolone-5-propanoate.

It belongs to the metallo-dependent hydrolases superfamily. HutI family. Zn(2+) serves as cofactor. The cofactor is Fe(3+).

Its subcellular location is the cytoplasm. The enzyme catalyses 4-imidazolone-5-propanoate + H2O = N-formimidoyl-L-glutamate. The protein operates within amino-acid degradation; L-histidine degradation into L-glutamate; N-formimidoyl-L-glutamate from L-histidine: step 3/3. Functionally, catalyzes the hydrolytic cleavage of the carbon-nitrogen bond in imidazolone-5-propanoate to yield N-formimidoyl-L-glutamate. It is the third step in the universal histidine degradation pathway. This chain is Imidazolonepropionase, found in Shewanella frigidimarina (strain NCIMB 400).